The chain runs to 357 residues: MTNTNRRTITVYGATGAQGGPVVRSLLKNNAFKVRAITRKPESEAAKALADLGAEIVQGDGWKKEQMVAAFSGSWAAFVNTNSDDPCFWDANHPTEFDLGKIIIDGIIQAGTVKHLVYSSFVDTSSFTNGQAIIEAADEKSKIERYAASSGHFDTVCPLYQGWYMDVFRGQEYAHALGGFPYFEDEDKFRTLRLPRWGTHTDMPLPWISLEDDFGDIVHGIFLTPEDYNGRVVPTVSDIRTYPEMIDAFQSGMPSLFWFLVCRLTSVHALATGQKARYIPVTDWEAHFGDSHHGKESLAIFKFGKFTNGKYFGDEPISTDISATLKAKAAEAQGKDPSDRKLITLVEWFEKHVAPLL.

NADP(+) contacts are provided by residues 13-18, 39-43, 60-61, 81-83, K140, and 164-167; these read GATGAQ, RKPES, DG, TNS, and YMDV.

Belongs to the NmrA-type oxidoreductase family.

NmrA-like family domain-containing oxidoreductase; part of the gene cluster that mediates the biosynthesis of notoamide, a fungal indole alkaloid that belongs to a family of natural products containing a characteristic bicyclo[2.2.2]diazaoctane core. The first step of notoamide biosynthesis involves coupling of L-proline and L-tryptophan by the bimodular NRPS notE', to produce cyclo-L-tryptophan-L-proline called brevianamide F. The reverse prenyltransferase notF' then acts as a deoxybrevianamide E synthase and converts brevianamide F to deoxybrevianamide E via reverse prenylation at C-2 of the indole ring leading to the bicyclo[2.2.2]diazaoctane core. Deoxybrevianamide E is further hydroxylated at C-6 of the indole ring, likely catalyzed by the cytochrome P450 monooxygenase notG', to yield 6-hydroxy-deoxybrevianamide E. 6-hydroxy-deoxybrevianamide E is a specific substrate of the prenyltransferase notC' for normal prenylation at C-7 to produce 6-hydroxy-7-prenyl-deoxybrevianamide, also called notoamide S. As the proposed pivotal branching point in notoamide biosynthesis, notoamide S can be diverted to notoamide E through an oxidative pyran ring closure putatively catalyzed by either notH' cytochrome P450 monooxygenase or the notD' FAD-linked oxidoreductase. This step would be followed by an indole 2,3-epoxidation-initiated pinacol-like rearrangement catalyzed by the notB' FAD-dependent monooxygenase leading to the formation of notoamide C and notoamide D. On the other hand notoamide S is converted to notoamide T by notH' (or notD'), a bifunctional oxidase that also functions as the intramolecular Diels-Alderase responsible for generation of (-)-notoamide T. To generate antipodal (+)-notoaminide T, notH (or notD) in Aspergillus strain MF297-2 is expected to catalyze a Diels-Alder reaction leading to the opposite stereochemistry. The remaining oxidoreductase notD' (or notH') likely catalyzes the oxidative pyran ring formation to yield (-)-stephacidin A. The FAD-dependent monooxygenase notI' is highly similar to notB' and is predicted to catalyze a similar conversion from (-)-stephacidin A to (+)-notoamide B via the 2,3-epoxidation of (-)-stephacidin A followed by a pinacol-type rearrangement. Finally, it remains unclear which enzyme could be responsible for the final hydroxylation steps leading to notoamide A and sclerotiamide. This is NmrA-like family domain-containing oxidoreductase notA' from Aspergillus versicolor.